The chain runs to 122 residues: Small ribosomal subunit protein uS13 (122 aa).

The disordered stretch occupies residues R93 to K122.

Belongs to the universal ribosomal protein uS13 family. As to quaternary structure, part of the 30S ribosomal subunit. Forms a loose heterodimer with protein S19. Forms two bridges to the 50S subunit in the 70S ribosome.

Located at the top of the head of the 30S subunit, it contacts several helices of the 16S rRNA. In the 70S ribosome it contacts the 23S rRNA (bridge B1a) and protein L5 of the 50S subunit (bridge B1b), connecting the 2 subunits; these bridges are implicated in subunit movement. Contacts the tRNAs in the A and P-sites. The sequence is that of Small ribosomal subunit protein uS13 from Corynebacterium jeikeium (strain K411).